A 258-amino-acid polypeptide reads, in one-letter code: Type III pantothenate kinase (258 aa).

7-14 (DVGNTRLK) lines the ATP pocket. Substrate is bound by residues Y96 and 103–106 (GADR). The active-site Proton acceptor is the D105. T133 contributes to the ATP binding site. T183 contacts substrate.

It belongs to the type III pantothenate kinase family. As to quaternary structure, homodimer. It depends on NH4(+) as a cofactor. K(+) serves as cofactor.

The protein localises to the cytoplasm. The enzyme catalyses (R)-pantothenate + ATP = (R)-4'-phosphopantothenate + ADP + H(+). The protein operates within cofactor biosynthesis; coenzyme A biosynthesis; CoA from (R)-pantothenate: step 1/5. Its function is as follows. Catalyzes the phosphorylation of pantothenate (Pan), the first step in CoA biosynthesis. The chain is Type III pantothenate kinase from Acidovorax ebreus (strain TPSY) (Diaphorobacter sp. (strain TPSY)).